The primary structure comprises 222 residues: Small ribosomal subunit protein eS8z (222 aa).

Disordered stretches follow at residues methionine 1–lysine 37 and lysine 125–proline 147. The segment covering isoleucine 8–lysine 26 has biased composition (basic residues).

This sequence belongs to the eukaryotic ribosomal protein eS8 family.

This Arabidopsis thaliana (Mouse-ear cress) protein is Small ribosomal subunit protein eS8z (RPS8A).